Consider the following 1732-residue polypeptide: Serine/threonine-protein kinase MRCK alpha (1732 aa).

Residues F77 to F343 enclose the Protein kinase domain. ATP is bound by residues I83–V91 and K106. D201 acts as the Proton acceptor in catalysis. S222 and S234 each carry phosphoserine; by autocatalysis. T240 carries the post-translational modification Phosphothreonine; by autocatalysis. The 71-residue stretch at S344–S414 folds into the AGC-kinase C-terminal domain. 2 coiled-coil regions span residues N437 to Q820 and L880 to G943. Residues E968–S1003 form a disordered region. The Phorbol-ester/DAG-type zinc finger occupies T1012–C1062. One can recognise a PH domain in the interval G1082–K1201. Phosphoserine is present on S1127. A CNH domain is found at I1227 to N1499. The residue at position 1545 (S1545) is a Phosphoserine. A CRIB domain is found at I1571 to G1584. The interval I1591 to P1732 is disordered. Residues S1604–K1619 are compositionally biased toward polar residues. 7 positions are modified to phosphoserine: S1611, S1613, S1629, S1651, S1664, S1669, and S1693. The span at G1625 to A1640 shows a compositional bias: low complexity. The segment covering P1665–G1674 has biased composition (low complexity). The segment covering S1697–S1707 has biased composition (low complexity). Phosphoserine occurs at positions 1719 and 1721.

The protein belongs to the protein kinase superfamily. AGC Ser/Thr protein kinase family. DMPK subfamily. In terms of assembly, homodimer and homotetramer via the coiled coil regions. Interacts tightly with GTP-bound but not GDP-bound CDC42. Forms a tripartite complex with MYO18A and LURAP1 with the latter acting as an adapter connecting CDC42BPA and MYO18A. LURAP1 binding results in activation of CDC42BPA by abolition of its negative autoregulation. Interacts with LURAP1. Interacts (via AGC-kinase C-terminal domain) with FAM89B/LRAP25 (via LRR repeat). Forms a tripartite complex with FAM89B/LRAP25 and LIMK1. Mg(2+) is required as a cofactor. Post-translationally, proteolytically cleaved by caspases upon apoptosis induction. The cleavage at Asp-478 by CASP3 increases its kinase activity (in vitro). In terms of tissue distribution, abundant in the heart, brain, skeletal muscle, kidney, and pancreas, with little or no expression in the lung and liver.

It localises to the cytoplasm. The protein resides in the cell projection. Its subcellular location is the lamellipodium. It catalyses the reaction L-seryl-[protein] + ATP = O-phospho-L-seryl-[protein] + ADP + H(+). The catalysed reaction is L-threonyl-[protein] + ATP = O-phospho-L-threonyl-[protein] + ADP + H(+). With respect to regulation, maintained in an inactive, closed conformation by an interaction between the kinase domain and the negative autoregulatory C-terminal coiled-coil region. Agonist binding to the phorbol ester binding site disrupts this, releasing the kinase domain to allow N-terminus-mediated dimerization and kinase activation by transautophosphorylation. Inhibited by chelerythrine chloride. Its function is as follows. Serine/threonine-protein kinase which is an important downstream effector of CDC42 and plays a role in the regulation of cytoskeleton reorganization and cell migration. Regulates actin cytoskeletal reorganization via phosphorylation of PPP1R12C and MYL9/MLC2. In concert with MYO18A and LURAP1, is involved in modulating lamellar actomyosin retrograde flow that is crucial to cell protrusion and migration. Phosphorylates: PPP1R12A, LIMK1 and LIMK2. May play a role in TFRC-mediated iron uptake. In concert with FAM89B/LRAP25 mediates the targeting of LIMK1 to the lamellipodium resulting in its activation and subsequent phosphorylation of CFL1 which is important for lamellipodial F-actin regulation. Triggers the formation of an extrusion apical actin ring required for epithelial extrusion of apoptotic cells. The chain is Serine/threonine-protein kinase MRCK alpha from Homo sapiens (Human).